A 326-amino-acid chain; its full sequence is L-Ala--D-Glu endopeptidase (326 aa).

The first 19 residues, 1 to 19 (MKVLLSALLLLLFAFEPSA), serve as a signal peptide directing secretion. 4 residues coordinate Zn(2+): His-204, Asp-208, His-292, and His-294.

Belongs to the peptidase M23B family. Zn(2+) is required as a cofactor.

L-Ala--D-Glu endopeptidase involved in production of single L-alanine side chains from tetrapeptides in the spore cortex peptidoglycan. Therefore, is required for the endospore cortex maturation. The chain is L-Ala--D-Glu endopeptidase (lytH) from Bacillus subtilis (strain 168).